The chain runs to 309 residues: Taste receptor type 2 member 43 (309 aa).

Position 1 (M1) is a topological domain, extracellular. A helical transmembrane segment spans residues 2-22; the sequence is ITFLPIIFSSLVVVTFVIGNF. Residues 23-46 are Cytoplasmic-facing; it reads ANGFIALVNSIEWFKRQKISFADQ. The helical transmembrane segment at 47–67 threads the bilayer; the sequence is ILTALAVSRVGLLWVLLLNWY. Topologically, residues 68 to 86 are extracellular; that stretch reads STVLNPAFNSVEVRTTAYN. A helical transmembrane segment spans residues 87 to 107; it reads IWAVINHFSNWLATSLSIFYL. Over 108–126 the chain is Cytoplasmic; that stretch reads LKIANFSNFIFLHLKRRVK. A helical membrane pass occupies residues 127–147; the sequence is SVILVMLLGPLLFLACHLFVI. Over 148-178 the chain is Extracellular; the sequence is NMNEIVRTKEFEGNMTWKIKLKSAMYFSNMT. N-linked (GlcNAc...) asparagine glycans are attached at residues N161 and N176. A helical membrane pass occupies residues 179-199; sequence VTMVANLVPFTLTLLSFLLLI. At 200-229 the chain is on the cytoplasmic side; it reads CSLCKHLKKMQLHGKGSQDPSTKVHIKVLQ. Residues 230–250 form a helical membrane-spanning segment; it reads TVISFLLLCAIYFLSIMISVW. At 251-259 the chain is on the extracellular side; sequence SFGSLKNKP. Residues 260 to 280 form a helical membrane-spanning segment; sequence VFMFCKAMRFSYPSIHPFILI. The Cytoplasmic segment spans residues 281 to 309; that stretch reads WGNKKLKQTFLSVFWQMRYWVKGEKTSSP.

This sequence belongs to the G-protein coupled receptor T2R family.

It localises to the membrane. It is found in the cell projection. Its subcellular location is the cilium membrane. Its function is as follows. Gustducin-coupled receptor immplicated in the perception of bitter compounds in the oral cavity and the gastrointestinal tract. Signals through PLCB2 and the calcium-regulated cation channel TRPM5. Activated by the sulfonyl amide sweeteners saccharin and acesulfame K. In airway epithelial cells, binding of bitter compounds increases the intracellular calcium ion concentration and stimulates ciliary beat frequency. May act as chemosensory receptors in airway epithelial cells to detect and eliminate potential noxious agents from the airways. This is Taste receptor type 2 member 43 (TAS2R43) from Pan troglodytes (Chimpanzee).